Consider the following 118-residue polypeptide: Protein RALF-like 24 (118 aa).

An N-terminal signal peptide occupies residues 1 to 22; sequence MSRSLALVYLSLLCLQTHLSIS. Positions 23–63 are cleaved as a propeptide — removed in mature form; that stretch reads VTVPIPSVNGEIDAMLNRNGVIGEEEGEEMMPSEISRRVMM. 2 cysteine pairs are disulfide-bonded: cysteine 81–cysteine 91 and cysteine 103–cysteine 109.

Belongs to the plant rapid alkalinization factor (RALF) family. In terms of processing, proteolytically cleaved, probably by S1P, a subtilisin-like serine protease (subtilase).

The protein localises to the secreted. Functionally, cell signaling peptide that may regulate plant stress, growth, and development. Mediates a rapid alkalinization of extracellular space by mediating a transient increase in the cytoplasmic Ca(2+) concentration leading to a calcium-dependent signaling events through a cell surface receptor and a concomitant activation of some intracellular mitogen-activated protein kinases. In Arabidopsis thaliana (Mouse-ear cress), this protein is Protein RALF-like 24 (RALFL24).